Here is a 328-residue protein sequence, read N- to C-terminus: Stress response kinase A (328 aa).

Asp201 serves as the catalytic Proton acceptor. 2 residues coordinate Mg(2+): Asn206 and Asp217. Asp217 is a catalytic residue.

Belongs to the SrkA/RdoA protein kinase family. In terms of assembly, monomer. It depends on Mg(2+) as a cofactor.

Its subcellular location is the cytoplasm. It catalyses the reaction L-seryl-[protein] + ATP = O-phospho-L-seryl-[protein] + ADP + H(+). It carries out the reaction L-threonyl-[protein] + ATP = O-phospho-L-threonyl-[protein] + ADP + H(+). A protein kinase that phosphorylates Ser and Thr residues. Probably acts to suppress the effects of stress linked to accumulation of reactive oxygen species. Probably involved in the extracytoplasmic stress response. The chain is Stress response kinase A from Salmonella choleraesuis (strain SC-B67).